A 310-amino-acid chain; its full sequence is Ribosomal RNA small subunit methyltransferase H (310 aa).

S-adenosyl-L-methionine contacts are provided by residues 32–34 (GGH), D52, F79, D100, and Q107.

The protein belongs to the methyltransferase superfamily. RsmH family.

Its subcellular location is the cytoplasm. It catalyses the reaction cytidine(1402) in 16S rRNA + S-adenosyl-L-methionine = N(4)-methylcytidine(1402) in 16S rRNA + S-adenosyl-L-homocysteine + H(+). Its function is as follows. Specifically methylates the N4 position of cytidine in position 1402 (C1402) of 16S rRNA. The polypeptide is Ribosomal RNA small subunit methyltransferase H (Bacillus cereus (strain G9842)).